Reading from the N-terminus, the 66-residue chain is Large ribosomal subunit protein bL35 (66 aa).

Residues 1-16 (MPKQKTHRASAKRFKR) show a composition bias toward basic residues. Residues 1 to 20 (MPKQKTHRASAKRFKRTGSG) form a disordered region.

The protein belongs to the bacterial ribosomal protein bL35 family.

The chain is Large ribosomal subunit protein bL35 from Streptococcus uberis (strain ATCC BAA-854 / 0140J).